We begin with the raw amino-acid sequence, 490 residues long: Protein nucleotidyltransferase YdiU (490 aa).

ATP is bound by residues glycine 94, glycine 96, arginine 97, lysine 117, aspartate 129, glycine 130, arginine 180, and arginine 187. The active-site Proton acceptor is aspartate 256. Mg(2+)-binding residues include asparagine 257 and aspartate 266. Aspartate 266 lines the ATP pocket.

Belongs to the SELO family. Mg(2+) serves as cofactor. Mn(2+) is required as a cofactor.

The enzyme catalyses L-seryl-[protein] + ATP = 3-O-(5'-adenylyl)-L-seryl-[protein] + diphosphate. The catalysed reaction is L-threonyl-[protein] + ATP = 3-O-(5'-adenylyl)-L-threonyl-[protein] + diphosphate. It carries out the reaction L-tyrosyl-[protein] + ATP = O-(5'-adenylyl)-L-tyrosyl-[protein] + diphosphate. It catalyses the reaction L-histidyl-[protein] + UTP = N(tele)-(5'-uridylyl)-L-histidyl-[protein] + diphosphate. The enzyme catalyses L-seryl-[protein] + UTP = O-(5'-uridylyl)-L-seryl-[protein] + diphosphate. The catalysed reaction is L-tyrosyl-[protein] + UTP = O-(5'-uridylyl)-L-tyrosyl-[protein] + diphosphate. Its function is as follows. Nucleotidyltransferase involved in the post-translational modification of proteins. It can catalyze the addition of adenosine monophosphate (AMP) or uridine monophosphate (UMP) to a protein, resulting in modifications known as AMPylation and UMPylation. This Clostridium perfringens (strain ATCC 13124 / DSM 756 / JCM 1290 / NCIMB 6125 / NCTC 8237 / Type A) protein is Protein nucleotidyltransferase YdiU.